We begin with the raw amino-acid sequence, 428 residues long: Trigger factor (428 aa).

Residues 163–248 (KDIVTIDFEG…VKEIKAKELP (86 aa)) enclose the PPIase FKBP-type domain.

This sequence belongs to the FKBP-type PPIase family. Tig subfamily.

It is found in the cytoplasm. It catalyses the reaction [protein]-peptidylproline (omega=180) = [protein]-peptidylproline (omega=0). Its function is as follows. Involved in protein export. Acts as a chaperone by maintaining the newly synthesized protein in an open conformation. Functions as a peptidyl-prolyl cis-trans isomerase. The polypeptide is Trigger factor (Lachnoclostridium phytofermentans (strain ATCC 700394 / DSM 18823 / ISDg) (Clostridium phytofermentans)).